A 220-amino-acid chain; its full sequence is Chaperone protein TorD (220 aa).

This sequence belongs to the TorD/DmsD family. TorD subfamily.

The protein localises to the cytoplasm. In terms of biological role, involved in the biogenesis of TorA. Acts on TorA before the insertion of the molybdenum cofactor and, as a result, probably favors a conformation of the apoenzyme that is competent for acquiring the cofactor. This chain is Chaperone protein TorD, found in Vibrio cholerae serotype O1 (strain M66-2).